The chain runs to 223 residues: Cytidylate kinase (223 aa).

Position 13–21 (13–21 (GPSASGKGT)) interacts with ATP.

This sequence belongs to the cytidylate kinase family. Type 1 subfamily.

The protein localises to the cytoplasm. It catalyses the reaction CMP + ATP = CDP + ADP. It carries out the reaction dCMP + ATP = dCDP + ADP. This is Cytidylate kinase from Nitrosomonas europaea (strain ATCC 19718 / CIP 103999 / KCTC 2705 / NBRC 14298).